We begin with the raw amino-acid sequence, 740 residues long: Elongation factor 2 (740 aa).

The region spanning 23 to 264 is the tr-type G domain; it reads AQIRNAGTLA…MIIEHVPPPN (242 aa). Residues 32 to 39, 98 to 102, and 152 to 155 contribute to the GTP site; these read AHVDHGKT, DTPGH, and NKID. H605 carries the post-translational modification Diphthamide.

The protein belongs to the TRAFAC class translation factor GTPase superfamily. Classic translation factor GTPase family. EF-G/EF-2 subfamily.

Its subcellular location is the cytoplasm. In terms of biological role, catalyzes the GTP-dependent ribosomal translocation step during translation elongation. During this step, the ribosome changes from the pre-translocational (PRE) to the post-translocational (POST) state as the newly formed A-site-bound peptidyl-tRNA and P-site-bound deacylated tRNA move to the P and E sites, respectively. Catalyzes the coordinated movement of the two tRNA molecules, the mRNA and conformational changes in the ribosome. This chain is Elongation factor 2, found in Pyrobaculum islandicum (strain DSM 4184 / JCM 9189 / GEO3).